The primary structure comprises 126 residues: Small ribosomal subunit protein uS8 (126 aa).

The protein belongs to the universal ribosomal protein uS8 family. In terms of assembly, part of the 30S ribosomal subunit. Contacts proteins S5 and S12.

One of the primary rRNA binding proteins, it binds directly to 16S rRNA central domain where it helps coordinate assembly of the platform of the 30S subunit. In Lawsonia intracellularis (strain PHE/MN1-00), this protein is Small ribosomal subunit protein uS8.